A 660-amino-acid chain; its full sequence is Bifunctional polymyxin resistance protein ArnA (660 aa).

The tract at residues 1–304 (MKAVVFAYHN…EMYLVEGMRF (304 aa)) is formyltransferase ArnAFT. The active-site Proton donor; for formyltransferase activity is histidine 104. Residues arginine 114 and 136–140 (TVKPD) each bind (6R)-10-formyltetrahydrofolate. The tract at residues 316–660 (RRQKVLIMGA…FLKTAVEETK (345 aa)) is dehydrogenase ArnADH. NAD(+) is bound by residues aspartate 349 and 370 to 371 (DI). Residues alanine 395, tyrosine 400, and 434 to 435 (TS) each bind UDP-alpha-D-glucuronate. Glutamate 436 (proton acceptor; for decarboxylase activity) is an active-site residue. UDP-alpha-D-glucuronate-binding positions include arginine 462, asparagine 494, 528–537 (KLIDGGEQKR), and tyrosine 615. The active-site Proton donor; for decarboxylase activity is arginine 621.

The protein in the N-terminal section; belongs to the Fmt family. UDP-L-Ara4N formyltransferase subfamily. It in the C-terminal section; belongs to the NAD(P)-dependent epimerase/dehydratase family. UDP-glucuronic acid decarboxylase subfamily. In terms of assembly, homohexamer, formed by a dimer of trimers.

It carries out the reaction UDP-alpha-D-glucuronate + NAD(+) = UDP-beta-L-threo-pentopyranos-4-ulose + CO2 + NADH. The enzyme catalyses UDP-4-amino-4-deoxy-beta-L-arabinose + (6R)-10-formyltetrahydrofolate = UDP-4-deoxy-4-formamido-beta-L-arabinose + (6S)-5,6,7,8-tetrahydrofolate + H(+). It functions in the pathway nucleotide-sugar biosynthesis; UDP-4-deoxy-4-formamido-beta-L-arabinose biosynthesis; UDP-4-deoxy-4-formamido-beta-L-arabinose from UDP-alpha-D-glucuronate: step 1/3. The protein operates within nucleotide-sugar biosynthesis; UDP-4-deoxy-4-formamido-beta-L-arabinose biosynthesis; UDP-4-deoxy-4-formamido-beta-L-arabinose from UDP-alpha-D-glucuronate: step 3/3. It participates in bacterial outer membrane biogenesis; lipopolysaccharide biosynthesis. Functionally, bifunctional enzyme that catalyzes the oxidative decarboxylation of UDP-glucuronic acid (UDP-GlcUA) to UDP-4-keto-arabinose (UDP-Ara4O) and the addition of a formyl group to UDP-4-amino-4-deoxy-L-arabinose (UDP-L-Ara4N) to form UDP-L-4-formamido-arabinose (UDP-L-Ara4FN). The modified arabinose is attached to lipid A and is required for resistance to polymyxin and cationic antimicrobial peptides. This is Bifunctional polymyxin resistance protein ArnA from Shewanella sediminis (strain HAW-EB3).